A 215-amino-acid polypeptide reads, in one-letter code: LysM and putative peptidoglycan-binding domain-containing protein 2 (215 aa).

Positions 1–40 are disordered; the sequence is MADSSPALSLREGGPRAPRPSAPSPPPRSRSGSESEEAEL. Ala2 is subject to N-acetylalanine. Phosphoserine is present on residues Ser5, Ser24, Ser33, and Ser57. The span at 17 to 28 shows a compositional bias: pro residues; that stretch reads APRPSAPSPPPR. The LysM domain occupies 71-115; it reads VEHRVRAGDTLQGIALKYGVTMEQIKRANKLFTNDCIFLKKTLNI. Disordered regions lie at residues 132–175 and 193–215; these read DSPE…EEVS and AAKK…LYHS. Basic and acidic residues predominate over residues 196-205; that stretch reads KLKEESRDEE.

This is LysM and putative peptidoglycan-binding domain-containing protein 2 (LYSMD2) from Homo sapiens (Human).